Here is a 129-residue protein sequence, read N- to C-terminus: UPF0325 protein Ent638_0703 (129 aa).

This sequence belongs to the UPF0325 family.

This Enterobacter sp. (strain 638) protein is UPF0325 protein Ent638_0703.